We begin with the raw amino-acid sequence, 184 residues long: Ribosome-recycling factor (184 aa).

This sequence belongs to the RRF family.

The protein resides in the cytoplasm. In terms of biological role, responsible for the release of ribosomes from messenger RNA at the termination of protein biosynthesis. May increase the efficiency of translation by recycling ribosomes from one round of translation to another. This Bifidobacterium adolescentis (strain ATCC 15703 / DSM 20083 / NCTC 11814 / E194a) protein is Ribosome-recycling factor.